We begin with the raw amino-acid sequence, 238 residues long: MFNDLLSELTKNILEHGGKKLIVPNEFCECVSKQGNCKLNSWLWDVPGFRRWRVTRLDAGDRLQVLNSVAYPNEQNDMPIMGIDLLWFEKKQKLVAILDFQPLVQDKEYLDRYFDGLKSLKKSFNEFNSDMKSNIYDPTKYFSPWALFCKGGNFEAENILPKIFSSFLKCYWKNLDLSKANENHIKSQEVSILHIDYDKYSAEKDPAHGLFSGFFGKEWSEKYMKEFLFPLSLENINS.

This sequence belongs to the HY2 family.

It carries out the reaction 15,16-dihydrobiliverdin + oxidized 2[4Fe-4S]-[ferredoxin] = biliverdin IXalpha + reduced 2[4Fe-4S]-[ferredoxin] + 2 H(+). Catalyzes the two-electron reduction of biliverdin IX-alpha at the C15 methine bridge. The chain is 15,16-dihydrobiliverdin:ferredoxin oxidoreductase from Prochlorococcus marinus (strain NATL1A).